The following is an 882-amino-acid chain: Alanine--tRNA ligase (882 aa).

Zn(2+) is bound by residues His570, His574, Cys672, and His676.

Belongs to the class-II aminoacyl-tRNA synthetase family. Requires Zn(2+) as cofactor.

Its subcellular location is the cytoplasm. The catalysed reaction is tRNA(Ala) + L-alanine + ATP = L-alanyl-tRNA(Ala) + AMP + diphosphate. Functionally, catalyzes the attachment of alanine to tRNA(Ala) in a two-step reaction: alanine is first activated by ATP to form Ala-AMP and then transferred to the acceptor end of tRNA(Ala). Also edits incorrectly charged Ser-tRNA(Ala) and Gly-tRNA(Ala) via its editing domain. This Xanthomonas campestris pv. campestris (strain B100) protein is Alanine--tRNA ligase.